A 250-amino-acid polypeptide reads, in one-letter code: Glutamate racemase (250 aa).

Substrate contacts are provided by residues 7-8 (DS) and 39-40 (YG). The Proton donor/acceptor role is filled by cysteine 70. Position 71 to 72 (71 to 72 (NT)) interacts with substrate. The Proton donor/acceptor role is filled by cysteine 180. Position 181–182 (181–182 (TH)) interacts with substrate.

The protein belongs to the aspartate/glutamate racemases family.

It carries out the reaction L-glutamate = D-glutamate. Its pathway is cell wall biogenesis; peptidoglycan biosynthesis. Functionally, provides the (R)-glutamate required for cell wall biosynthesis. The polypeptide is Glutamate racemase (Campylobacter jejuni subsp. jejuni serotype O:2 (strain ATCC 700819 / NCTC 11168)).